The chain runs to 284 residues: Tropomyosin, smooth muscle/fibroblast CTM1 (284 aa).

Residues Met-1–Leu-284 adopt a coiled-coil conformation. The tract at residues Ala-18–Gly-38 is disordered.

This sequence belongs to the tropomyosin family. In terms of assembly, homodimer. Predominantly expressed in body wall muscle and heart, low in intestine, ovary and larval tail muscle.

Its function is as follows. The function of tropomyosin in smooth muscle and non-muscle cells is not clear. The polypeptide is Tropomyosin, smooth muscle/fibroblast CTM1 (CTM1) (Ciona intestinalis (Transparent sea squirt)).